Consider the following 180-residue polypeptide: Crossover junction endodeoxyribonuclease RuvC (180 aa).

Active-site residues include Asp7, Glu66, and Asp138. Mg(2+)-binding residues include Asp7, Glu66, and Asp138.

This sequence belongs to the RuvC family. As to quaternary structure, homodimer which binds Holliday junction (HJ) DNA. The HJ becomes 2-fold symmetrical on binding to RuvC with unstacked arms; it has a different conformation from HJ DNA in complex with RuvA. In the full resolvosome a probable DNA-RuvA(4)-RuvB(12)-RuvC(2) complex forms which resolves the HJ. The cofactor is Mg(2+).

The protein localises to the cytoplasm. The enzyme catalyses Endonucleolytic cleavage at a junction such as a reciprocal single-stranded crossover between two homologous DNA duplexes (Holliday junction).. Functionally, the RuvA-RuvB-RuvC complex processes Holliday junction (HJ) DNA during genetic recombination and DNA repair. Endonuclease that resolves HJ intermediates. Cleaves cruciform DNA by making single-stranded nicks across the HJ at symmetrical positions within the homologous arms, yielding a 5'-phosphate and a 3'-hydroxyl group; requires a central core of homology in the junction. The consensus cleavage sequence is 5'-(A/T)TT(C/G)-3'. Cleavage occurs on the 3'-side of the TT dinucleotide at the point of strand exchange. HJ branch migration catalyzed by RuvA-RuvB allows RuvC to scan DNA until it finds its consensus sequence, where it cleaves and resolves the cruciform DNA. In Paraburkholderia phymatum (strain DSM 17167 / CIP 108236 / LMG 21445 / STM815) (Burkholderia phymatum), this protein is Crossover junction endodeoxyribonuclease RuvC.